Reading from the N-terminus, the 100-residue chain is Small ribosomal subunit protein uS14c (100 aa).

This sequence belongs to the universal ribosomal protein uS14 family. Part of the 30S ribosomal subunit.

It localises to the plastid. The protein localises to the chloroplast. Its function is as follows. Binds 16S rRNA, required for the assembly of 30S particles. The chain is Small ribosomal subunit protein uS14c from Chloranthus spicatus (Chulantree).